Here is a 667-residue protein sequence, read N- to C-terminus: Phosphomethylpyrimidine synthase (667 aa).

Substrate is bound by residues asparagine 235, methionine 264, tyrosine 293, histidine 329, serine 349–glycine 351, aspartate 390–arginine 393, and glutamate 429. Histidine 433 lines the Zn(2+) pocket. Tyrosine 456 provides a ligand contact to substrate. Histidine 497 contacts Zn(2+). Residues cysteine 577, cysteine 580, and cysteine 585 each contribute to the [4Fe-4S] cluster site. Positions aspartate 618–serine 642 are disordered.

Belongs to the ThiC family. As to quaternary structure, homodimer. [4Fe-4S] cluster is required as a cofactor.

The catalysed reaction is 5-amino-1-(5-phospho-beta-D-ribosyl)imidazole + S-adenosyl-L-methionine = 4-amino-2-methyl-5-(phosphooxymethyl)pyrimidine + CO + 5'-deoxyadenosine + formate + L-methionine + 3 H(+). It functions in the pathway cofactor biosynthesis; thiamine diphosphate biosynthesis. Functionally, catalyzes the synthesis of the hydroxymethylpyrimidine phosphate (HMP-P) moiety of thiamine from aminoimidazole ribotide (AIR) in a radical S-adenosyl-L-methionine (SAM)-dependent reaction. The polypeptide is Phosphomethylpyrimidine synthase (Shewanella pealeana (strain ATCC 700345 / ANG-SQ1)).